The chain runs to 677 residues: Gamma-tubulin complex subunit mod21 (677 aa).

In terms of assembly, component of the gamma-tubulin complex composed of at least alp4, alp6, alp16, ghf1, gtb1 and mod21.

Its subcellular location is the cytoplasm. The protein localises to the cytoskeleton. It localises to the microtubule organizing center. It is found in the spindle pole body. Its function is as follows. Component of the gamma-tubulin complex that is required for the regulation of both interphase microtubule organization and nucleation, and mitotic bipolar spindles. Required for correct septation. The chain is Gamma-tubulin complex subunit mod21 from Schizosaccharomyces pombe (strain 972 / ATCC 24843) (Fission yeast).